Consider the following 458-residue polypeptide: UDP-N-acetylmuramoylalanine--D-glutamate ligase (458 aa).

An ATP-binding site is contributed by glycine 124–threonine 130.

This sequence belongs to the MurCDEF family.

The protein resides in the cytoplasm. It catalyses the reaction UDP-N-acetyl-alpha-D-muramoyl-L-alanine + D-glutamate + ATP = UDP-N-acetyl-alpha-D-muramoyl-L-alanyl-D-glutamate + ADP + phosphate + H(+). It participates in cell wall biogenesis; peptidoglycan biosynthesis. In terms of biological role, cell wall formation. Catalyzes the addition of glutamate to the nucleotide precursor UDP-N-acetylmuramoyl-L-alanine (UMA). This is UDP-N-acetylmuramoylalanine--D-glutamate ligase from Clostridium botulinum (strain Okra / Type B1).